The chain runs to 323 residues: Ribose-phosphate pyrophosphokinase 2 (323 aa).

ATP contacts are provided by residues Asp43–Glu45 and Arg102–Gln103. Mg(2+) contacts are provided by His136 and Asp177. Residue Lys200 is part of the active site. Residues Arg202, Asp226, and Asp230–Thr234 contribute to the D-ribose 5-phosphate site.

This sequence belongs to the ribose-phosphate pyrophosphokinase family. Class I subfamily. As to quaternary structure, homohexamer. Mg(2+) is required as a cofactor.

Its subcellular location is the cytoplasm. The catalysed reaction is D-ribose 5-phosphate + ATP = 5-phospho-alpha-D-ribose 1-diphosphate + AMP + H(+). The protein operates within metabolic intermediate biosynthesis; 5-phospho-alpha-D-ribose 1-diphosphate biosynthesis; 5-phospho-alpha-D-ribose 1-diphosphate from D-ribose 5-phosphate (route I): step 1/1. Involved in the biosynthesis of the central metabolite phospho-alpha-D-ribosyl-1-pyrophosphate (PRPP) via the transfer of pyrophosphoryl group from ATP to 1-hydroxyl of ribose-5-phosphate (Rib-5-P). The protein is Ribose-phosphate pyrophosphokinase 2 of Enterococcus faecalis (strain ATCC 700802 / V583).